The chain runs to 104 residues: Large ribosomal subunit protein bL21 (104 aa).

This sequence belongs to the bacterial ribosomal protein bL21 family. Part of the 50S ribosomal subunit. Contacts protein L20.

Its function is as follows. This protein binds to 23S rRNA in the presence of protein L20. This chain is Large ribosomal subunit protein bL21, found in Acidiphilium cryptum (strain JF-5).